The sequence spans 160 residues: Cytochrome b6-f complex subunit 4 (160 aa).

The next 3 helical transmembrane spans lie at 36–56 (LLYM…GLAV), 95–115 (LLGV…PFIE), and 131–151 (TVFL…TLPI).

It belongs to the cytochrome b family. PetD subfamily. The 4 large subunits of the cytochrome b6-f complex are cytochrome b6, subunit IV (17 kDa polypeptide, petD), cytochrome f and the Rieske protein, while the 4 small subunits are petG, petL, petM and petN. The complex functions as a dimer.

It localises to the plastid. The protein resides in the chloroplast thylakoid membrane. Functionally, component of the cytochrome b6-f complex, which mediates electron transfer between photosystem II (PSII) and photosystem I (PSI), cyclic electron flow around PSI, and state transitions. This chain is Cytochrome b6-f complex subunit 4, found in Coleochaete orbicularis (Charophycean green alga).